Reading from the N-terminus, the 310-residue chain is UPF0324 membrane protein VP0936 (310 aa).

10 helical membrane-spanning segments follow: residues 7–29, 44–63, 75–94, 104–126, 133–155, 165–187, 199–218, 228–250, 257–279, and 289–308; these read PFGLALLFCLTPFVSSPIALVIG, IASFTKKLLSYSIIGLGFGI, GIGLIIATIVGTLVIGSLIA, AYLISSGTAICGGSAIAAVAPAI, IGLALATVFVLNSLALFIFPVIG, FGTWAAIAIHDTSSVVGAASAYG, LARALWIIPVALISAVIFSR, LVIPYFIFWYCAAIAFSDFFPQL, IFTIAKQALVVCLFLIGCSISIS, and LLFGVTLWVLISTTSLSWLV.

This sequence belongs to the UPF0324 family.

Its subcellular location is the cell membrane. The chain is UPF0324 membrane protein VP0936 from Vibrio parahaemolyticus serotype O3:K6 (strain RIMD 2210633).